A 66-amino-acid polypeptide reads, in one-letter code: Large ribosomal subunit protein bL32 (66 aa).

The protein belongs to the bacterial ribosomal protein bL32 family.

The protein is Large ribosomal subunit protein bL32 of Rickettsia akari (strain Hartford).